Reading from the N-terminus, the 36-residue chain is Dolichyl-diphosphooligosaccharide--protein glycosyltransferase subunit OST4 (36 aa).

Over 1 to 9 (MISDEQLNS) the chain is Lumenal. A helical transmembrane segment spans residues 10-28 (LAITFGIVMMTLIVIYHAV). Over 29 to 36 (DSTMSPKN) the chain is Cytoplasmic.

It belongs to the OST4 family. In terms of assembly, component of the oligosaccharyltransferase (OST) complex, which appears to exist in two assemblies comprising OST1, OST2, OST4, OST5, STT3, SWP1, WPB1, and either OST3 or OST6. OST assembly occurs through the formation of 3 subcomplexes. Subcomplex 1 contains OST1 and OST5, subcomplex 2 contains STT3, OST3, and OST4, and subcomplex 3 contains OST2, WBP1, and SWP1. Interacts with SEC61, SBH1 and SSS1.

Its subcellular location is the endoplasmic reticulum membrane. It participates in protein modification; protein glycosylation. Subunit of the oligosaccharyl transferase (OST) complex that catalyzes the initial transfer of a defined glycan (Glc(3)Man(9)GlcNAc(2) in eukaryotes) from the lipid carrier dolichol-pyrophosphate to an asparagine residue within an Asn-X-Ser/Thr consensus motif in nascent polypeptide chains, the first step in protein N-glycosylation. N-glycosylation occurs cotranslationally and the complex associates with the Sec61 complex at the channel-forming translocon complex that mediates protein translocation across the endoplasmic reticulum (ER). All subunits are required for a maximal enzyme activity. The polypeptide is Dolichyl-diphosphooligosaccharide--protein glycosyltransferase subunit OST4 (OST4) (Saccharomyces cerevisiae (strain ATCC 204508 / S288c) (Baker's yeast)).